A 381-amino-acid polypeptide reads, in one-letter code: MSLNMFWFLPTHGDGHYLGTEEGSRPVDHGYLQQIAQAADRLGYTGVLIPTGRSCEDAWLVAASMIPVTQRLKFLVALRPSVTSPTVAARQAATLDRLSNGRALFNLVTGSDPQELAGDGVFLDHSERYEASAEFTQVWRRLLLGETVNFNGKHIHVRGAKLLFPPIQQPYPPLYFGGSSDVAQELAAEQVDLYLTWGEPPELVKEKIEQVRAKAAAHGRKIRFGIRLHVIVRETNDEAWQAAERLISHLDDETIAKAQAAFARTDSVGQQRMAALHNGKRDNLEISPNLWAGVGLVRGGAGTALVGDGPTVAARINEYAALGIDSFVLSGYPHLEEAYRVGELLFPHLDVAIPEIPQPQPLNPQGEAVANDFIPRKVAQS.

Belongs to the SsuD family. Homotetramer.

The catalysed reaction is an alkanesulfonate + FMNH2 + O2 = an aldehyde + FMN + sulfite + H2O + 2 H(+). Functionally, catalyzes the desulfonation of aliphatic sulfonates. This Escherichia coli (strain SE11) protein is Alkanesulfonate monooxygenase.